A 271-amino-acid chain; its full sequence is tRNA pseudouridine synthase A (271 aa).

The active-site Nucleophile is D51. Substrate is bound at residue Y109.

It belongs to the tRNA pseudouridine synthase TruA family. Homodimer.

It catalyses the reaction uridine(38/39/40) in tRNA = pseudouridine(38/39/40) in tRNA. Its function is as follows. Formation of pseudouridine at positions 38, 39 and 40 in the anticodon stem and loop of transfer RNAs. The polypeptide is tRNA pseudouridine synthase A (Methylococcus capsulatus (strain ATCC 33009 / NCIMB 11132 / Bath)).